A 106-amino-acid polypeptide reads, in one-letter code: Large ribosomal subunit protein bL21 (106 aa).

This sequence belongs to the bacterial ribosomal protein bL21 family. In terms of assembly, part of the 50S ribosomal subunit. Contacts protein L20.

In terms of biological role, this protein binds to 23S rRNA in the presence of protein L20. This chain is Large ribosomal subunit protein bL21, found in Streptomyces griseus subsp. griseus (strain JCM 4626 / CBS 651.72 / NBRC 13350 / KCC S-0626 / ISP 5235).